The primary structure comprises 305 residues: Pseudouridine-5'-phosphate glycosidase (305 aa).

E30 (proton donor) is an active-site residue. 2 residues coordinate substrate: K91 and V111. D143 serves as a coordination point for Mn(2+). 145–147 is a substrate binding site; the sequence is SAD. K164 serves as the catalytic Nucleophile.

It belongs to the pseudouridine-5'-phosphate glycosidase family. As to quaternary structure, homotrimer. Mn(2+) is required as a cofactor.

The enzyme catalyses D-ribose 5-phosphate + uracil = psi-UMP + H2O. Its function is as follows. Catalyzes the reversible cleavage of pseudouridine 5'-phosphate (PsiMP) to ribose 5-phosphate and uracil. Functions biologically in the cleavage direction, as part of a pseudouridine degradation pathway. This is Pseudouridine-5'-phosphate glycosidase from Mesorhizobium japonicum (strain LMG 29417 / CECT 9101 / MAFF 303099) (Mesorhizobium loti (strain MAFF 303099)).